A 220-amino-acid polypeptide reads, in one-letter code: UPF0319 protein YccT (220 aa).

The first 20 residues, Met1–Ala20, serve as a signal peptide directing secretion.

Belongs to the UPF0319 family.

This Salmonella choleraesuis (strain SC-B67) protein is UPF0319 protein YccT.